A 613-amino-acid chain; its full sequence is Acetylcholinesterase (613 aa).

The first 30 residues, 1 to 30 (MRPPWCPLHTPSLTPPLLLLLFLIGGGAEA), serve as a signal peptide directing secretion. Asparagine 91 carries N-linked (GlcNAc...) asparagine glycosylation. Cysteines 99 and 126 form a disulfide. Catalysis depends on serine 233, which acts as the Acyl-ester intermediate. Cysteine 287 and cysteine 302 form a disulfide bridge. The N-linked (GlcNAc...) asparagine glycan is linked to asparagine 295. Glutamate 364 serves as the catalytic Charge relay system. An N-linked (GlcNAc...) asparagine glycan is attached at asparagine 380. A disulfide bridge links cysteine 439 with cysteine 559. Residue histidine 477 is the Charge relay system of the active site. Asparagine 494 is a glycosylation site (N-linked (GlcNAc...) asparagine).

The protein belongs to the type-B carboxylesterase/lipase family. As to quaternary structure, interacts with PRIMA1. The interaction with PRIMA1 is required to anchor it to the basal lamina of cells and organize into tetramers. Isoform H generates GPI-anchored dimers; disulfide linked. Isoform T generates multiple structures, ranging from monomers and dimers to collagen-tailed and hydrophobic-tailed forms, in which catalytic tetramers are associated with anchoring proteins that attach them to the basal lamina or to cell membranes. In the collagen-tailed forms, isoform T subunits are associated with a specific collagen, COLQ, which triggers the formation of isoform T tetramers, from monomers and dimers.

Its subcellular location is the synapse. The protein localises to the secreted. It is found in the cell membrane. It catalyses the reaction acetylcholine + H2O = choline + acetate + H(+). In terms of biological role, terminates signal transduction at the neuromuscular junction by rapid hydrolysis of the acetylcholine released into the synaptic cleft. The polypeptide is Acetylcholinesterase (ACHE) (Bos taurus (Bovine)).